Reading from the N-terminus, the 143-residue chain is Large ribosomal subunit protein uL11 (143 aa).

It belongs to the universal ribosomal protein uL11 family. Part of the ribosomal stalk of the 50S ribosomal subunit. Interacts with L10 and the large rRNA to form the base of the stalk. L10 forms an elongated spine to which L12 dimers bind in a sequential fashion forming a multimeric L10(L12)X complex. Post-translationally, one or more lysine residues are methylated.

In terms of biological role, forms part of the ribosomal stalk which helps the ribosome interact with GTP-bound translation factors. The chain is Large ribosomal subunit protein uL11 from Clavibacter michiganensis subsp. michiganensis (strain NCPPB 382).